The sequence spans 162 residues: tRNA (cytidine(34)-2'-O)-methyltransferase (162 aa).

S-adenosyl-L-methionine-binding residues include leucine 83, glycine 105, isoleucine 127, and serine 135.

It belongs to the class IV-like SAM-binding methyltransferase superfamily. RNA methyltransferase TrmH family. TrmL subfamily. As to quaternary structure, homodimer.

The protein localises to the cytoplasm. It carries out the reaction cytidine(34) in tRNA + S-adenosyl-L-methionine = 2'-O-methylcytidine(34) in tRNA + S-adenosyl-L-homocysteine + H(+). It catalyses the reaction 5-carboxymethylaminomethyluridine(34) in tRNA(Leu) + S-adenosyl-L-methionine = 5-carboxymethylaminomethyl-2'-O-methyluridine(34) in tRNA(Leu) + S-adenosyl-L-homocysteine + H(+). Its function is as follows. Methylates the ribose at the nucleotide 34 wobble position in the two leucyl isoacceptors tRNA(Leu)(CmAA) and tRNA(Leu)(cmnm5UmAA). Catalyzes the methyl transfer from S-adenosyl-L-methionine to the 2'-OH of the wobble nucleotide. This Yersinia pestis protein is tRNA (cytidine(34)-2'-O)-methyltransferase.